The chain runs to 2094 residues: MATLFQSFRGSAMPKRLLRYALARLDLLDSDALDLDNLDLAIGRNTVLEFRDVGIKLPKLAKLLGLPPTFTLLKAKVILLRVTIPMDIYSSSLKIEVDRVDVQLKVDSKDDIDGRSRTTIRGPTDVVPNTVDLAQSFLEQQSPKEKEELEAALSAETQDVGGSLVLGEDEDEQDEGSYGTGQALSLPAFLANFLQGIVDRTQIQIRGVTFQLDVSVPLEPNLNAPDVVTVKLALGQIDVEGVTTSLGSDEQDRPKFVHKEGKRLVSLQDITAFLISEANVFSTFERTTSVPPSLSPQSSAASALRSPVSRESTSMPFQEQEVEGRSTQLPSFEDNLGDSEAALNIPYDLSDEDDQEPGNKTAASSMSTPRASILHDHLAHQDESSSFLQGFTPYTAATPGIHLDADQMDEMSPQPAHDLSTHNQISLSNSVLSNSSSGSSGQEPTEDLTESHLYTHEDAESMYMSAFSQHEPTPQSVVPNELYIDPSESSVGVSSPQGTRDEPSSSLGATYGLEDSQASSTIGFQGLKTSPGLDASTISEQSDSSPAPIIPPSSDGNTEAGPESSIQGERHDRKSQSPNECLTPREPTRLAKKVLALDTLSLYLPSSQKSVHVVPLDGQSSPGEPQPLSPSLASSVFPHVPGAFGASTSLPPSPPPISPTSIELDNQEPNDGILEAILSPISIQFDASIGFILAMVVSRLLGAISPSKEEPAQQTAKDNPSATNQATDHQAVKVTLQAVSILFLERLGGVSEAPDSIFGVRTSKFDEDILLQAQLRNVQCLLSSDETVIDAEGFTFGYAGDDNHIISFDRSKEMMASVKDAVPSPGSEVSIKLKKGGPSSKIDIATLPLQICLDLRRLDETFSWFGGLSSFLNMGSSIASINGIGNSQPAKPPARPASRGVKFDTPINPDDRSATSDNKINMRINTVRLDLIGKDCNVILETSAFKLVSRDEGIGIALRKIQVHGPYSNESGPHPPISVTITGSRIEYSMTPKEADLERLLELISPSKLRDTPDDDEIMVDTLLRQRRKGSVLRLKFDNVAADISNIPHLGCLPSLGEDLARLGTVAKYLPEDDRPGLMSLILVRNAHVSVDVGGRFGVISASMAHFDVAHVSVPSLLAVAARSLEVNRNQIEELVGSSLLASHGDEETPVLVIRLIGGTVEPTITVKLRGLNVEYRVPTIIDLLNLGEDATPQDFEAGLAASVAQFGEQAHVAISGTSAITADSRTIGQDRQKLPVVELYFLDCVVGLNPLGMTSKMGIVLSDSCLKVWLEEKGDAKATWHIKQASILLIDDVALLDPEGKQNVKRHVHRPSDPVSAKIWDMDSVLCAQGFVSISQIRAAIIRVKAIQDEDGQRLIDVEVQDNFLVLETCADSTQTLIGLGNALKPPTPPSKENKFKTEIVPIEDMLASISQDAFGKAEGDYNFDDDFGEPEESDWTEDDLDEDLDIMGALGSQDDGQNTRQLLFDATSSSIMSDRTTTQYANDEVIFSGFSENPSHANSPDMSVENAFFASVPASETPQPEWKSAKMREVVPKEATIKKYPLKIKIRDMHLIWNLFDGYDWQRTRETIGKTVEEIQAKAYERRARMDRRMGYHEEDGLEEEAVSDFLFNSIYIGIPSHQDPRELSQNINQELYGINPSDTESVATTAFTTTTSRMGGPSRPKGKRLKLTRSKHHKITFELSGVNAVVRLLEPGSEETQSLIRVHIRDLDVYDHVPTSTWKRFAMYDEDHGPREMGVPMVDLKVRIVRPVLDVTAEEIVMFVNVLPLRLHVDQDALDFITRFFGFKDDTIKTTSSPSDVPFIQRAEIYDIPVKLDFKPKRVDYAGIRSGRTTEFMNFIILDNASMVMRHAIIYGALGFERFGEMLNDVWMPEIKRHQLPGVLAGLAPVRSLVDVGSGFRHLYEIPIREYKRNGRVVRSIGKGAAAFARTTGTELIKLGAKVAIGTQNMLQGAEGLLVETPEHNRYGVAGPSTVQRPGEWEEIDDSEEDIRHQISLYANQPTGVIQGLRHGYRSLSRDISIARQAIIAVPGEVRESSSATGAAKAVLEKAPIFIFRPAIGATKAIGQTLLGATNSLDPQNLRRMDNKYKPDPKS.

Disordered stretches follow at residues 287-336 (TTSV…EDNL), 348-369 (DLSD…MSTP), 429-449 (NSVL…EDLT), 486-511 (PSES…GATY), 523-587 (GFQG…PREP), 643-665 (AFGA…IELD), 708-727 (KEEP…NQAT), 885-917 (GNSQ…ATSD), and 2075-2094 (SLDP…DPKS). Residues 289–307 (SVPPSLSPQSSAASALRSP) show a composition bias toward low complexity. The span at 429–441 (NSVLSNSSSGSSG) shows a compositional bias: low complexity. Over residues 487–508 (SESSVGVSSPQGTRDEPSSSLG) the composition is skewed to polar residues. Residues 542-555 (SDSSPAPIIPPSSD) are compositionally biased toward low complexity. Residues 712–727 (AQQTAKDNPSATNQAT) show a composition bias toward polar residues. The span at 2080–2094 (NLRRMDNKYKPDPKS) shows a compositional bias: basic and acidic residues.

Belongs to the ATG2 family.

Its subcellular location is the preautophagosomal structure membrane. The protein resides in the endoplasmic reticulum membrane. It carries out the reaction a 1,2-diacyl-sn-glycero-3-phosphocholine(in) = a 1,2-diacyl-sn-glycero-3-phosphocholine(out). The enzyme catalyses a 1,2-diacyl-sn-glycero-3-phospho-L-serine(in) = a 1,2-diacyl-sn-glycero-3-phospho-L-serine(out). The catalysed reaction is a 1,2-diacyl-sn-glycero-3-phosphoethanolamine(in) = a 1,2-diacyl-sn-glycero-3-phosphoethanolamine(out). In terms of biological role, lipid transfer protein required for autophagosome completion and peroxisome degradation. Tethers the edge of the isolation membrane (IM) to the endoplasmic reticulum (ER) and mediates direct lipid transfer from ER to IM for IM expansion. ATG2 binds to the ER exit site (ERES), which is the membrane source for autophagosome formation, using basic residues in its N-terminal region (NR) and to the expanding edge of the IM through its C-terminal region. The latter binding is assisted by an ATG18-PtdIns3P interaction. ATG2 then extracts phospholipids from the membrane source using its NR and transfers them to ATG9 to the IM through its predicted beta-sheet-rich structure for membrane expansion. The chain is Autophagy-related protein 2 (ATG2) from Pyricularia oryzae (strain 70-15 / ATCC MYA-4617 / FGSC 8958) (Rice blast fungus).